Reading from the N-terminus, the 387-residue chain is MLMCRRWLVCSLRCHYRSFSFSAARRTVMPAWVIDKYGKNDVLRFTKNAALPIIHYPNEVVVKVHAAGLNPIDISMRGGYGAATMAMKRDPLNISQSGGEFPLILGRDVSGEIMECGLDVKYFKPGDQVWAAIPPWKQGSLAEFVVVSGNEVSHKPKSLRHDEAASIPYVAATAWSAIVNTGGLNKDNSAKKRVLILGGSGGVGTFAIQMVKAWGAHVTVTCSQNAERLVRDLGADDVVDYTAGPVEKQLKNLEKFDLILDSIGGETEKWALDLLKPWSGAKFVTLITPFLQNTDRLGLADGMMQSAVTVGCKVVKNLRKGVHYRWGFFAPSGSALDEVSEMVDAGKVRPVVEEVFSFAQVPEAFQKVEQGHARGKTVVSIMEDQKE.

The transit peptide at 1-27 (MLMCRRWLVCSLRCHYRSFSFSAARRT) directs the protein to the mitochondrion. Residues 38-379 (GKNDVLRFTK…QGHARGKTVV (342 aa)) enclose the Enoyl reductase (ER) domain. 11 residues coordinate NADPH: Ser-200, Gly-202, Val-203, Ser-223, Tyr-241, Leu-286, Gly-327, Phe-329, His-372, Ala-373, and Arg-374.

It belongs to the zinc-containing alcohol dehydrogenase family. Quinone oxidoreductase subfamily.

It localises to the mitochondrion matrix. Its subcellular location is the mitochondrion outer membrane. It carries out the reaction a 3-demethylubiquinone + NADH + 2 H(+) = a 3-demethylubiquinol + NAD(+). The enzyme catalyses a 3-demethylubiquinone + NADPH + 2 H(+) = a 3-demethylubiquinol + NADP(+). It catalyses the reaction 3-demethylubiquinone-10 + NADH + 2 H(+) = 3-demethylubiquinol-10 + NAD(+). The catalysed reaction is 3-demethylubiquinone-10 + NADPH + 2 H(+) = 3-demethylubiquinol-10 + NADP(+). Its pathway is cofactor biosynthesis; ubiquinone biosynthesis. In terms of biological role, NAD(P)H oxidoreductase involved in the ubiquinone biosynthetic pathway. Required for the O-methyltransferase activity of COQ3. Able to catalyze the oxidoreduction of 3-demethylubiquinone into 3-demethylubiquinol in vitro. However, it is unclear if 3-demethylubiquinone constitutes a substrate in vivo. May also play a role in the regulation of retinal ganglion cell (RGC) neurite outgrowth, and hence in the development of the inner retina and optic nerve. The chain is NAD(P)H oxidoreductase RTN4IP1, mitochondrial (rtn4ip1) from Danio rerio (Zebrafish).